Reading from the N-terminus, the 327-residue chain is Phenylalanine--tRNA ligase alpha subunit (327 aa).

Glu-252 contributes to the Mg(2+) binding site.

The protein belongs to the class-II aminoacyl-tRNA synthetase family. Phe-tRNA synthetase alpha subunit type 1 subfamily. As to quaternary structure, tetramer of two alpha and two beta subunits. It depends on Mg(2+) as a cofactor.

It localises to the cytoplasm. The catalysed reaction is tRNA(Phe) + L-phenylalanine + ATP = L-phenylalanyl-tRNA(Phe) + AMP + diphosphate + H(+). This Hamiltonella defensa subsp. Acyrthosiphon pisum (strain 5AT) protein is Phenylalanine--tRNA ligase alpha subunit.